The sequence spans 484 residues: tRNA sulfurtransferase (484 aa).

Residues 63–167 (ANLILLLSST…NEKLFFIDKK (105 aa)) form the THUMP domain. Residues 185-186 (LI), Lys267, Gly289, and Gln298 each bind ATP. A disulfide bond links Cys346 and Cys458. Residues 406–484 (FAENEIVLDI…GFDNVKVYRP (79 aa)) form the Rhodanese domain. The Cysteine persulfide intermediate role is filled by Cys458.

Belongs to the ThiI family.

Its subcellular location is the cytoplasm. It catalyses the reaction [ThiI sulfur-carrier protein]-S-sulfanyl-L-cysteine + a uridine in tRNA + 2 reduced [2Fe-2S]-[ferredoxin] + ATP + H(+) = [ThiI sulfur-carrier protein]-L-cysteine + a 4-thiouridine in tRNA + 2 oxidized [2Fe-2S]-[ferredoxin] + AMP + diphosphate. The catalysed reaction is [ThiS sulfur-carrier protein]-C-terminal Gly-Gly-AMP + S-sulfanyl-L-cysteinyl-[cysteine desulfurase] + AH2 = [ThiS sulfur-carrier protein]-C-terminal-Gly-aminoethanethioate + L-cysteinyl-[cysteine desulfurase] + A + AMP + 2 H(+). The protein operates within cofactor biosynthesis; thiamine diphosphate biosynthesis. Catalyzes the ATP-dependent transfer of a sulfur to tRNA to produce 4-thiouridine in position 8 of tRNAs, which functions as a near-UV photosensor. Also catalyzes the transfer of sulfur to the sulfur carrier protein ThiS, forming ThiS-thiocarboxylate. This is a step in the synthesis of thiazole, in the thiamine biosynthesis pathway. The sulfur is donated as persulfide by IscS. In Psychromonas ingrahamii (strain DSM 17664 / CCUG 51855 / 37), this protein is tRNA sulfurtransferase.